We begin with the raw amino-acid sequence, 853 residues long: Transcription factor CPH2 (853 aa).

Disordered stretches follow at residues 165-209 (EPPI…DKNS) and 296-353 (NMNP…VHHP). Positions 180–194 (TTTVSSTNSITNTTK) are enriched in low complexity. Residues 205–274 (KDKNSHNMIE…TKATEYIKHL (70 aa)) form the bHLH domain. Over residues 301 to 315 (SLPPPPQQMQAPPQP) the composition is skewed to pro residues. Over residues 330–352 (TPASQYPSPQQQVSPTQQQTVHH) the composition is skewed to low complexity.

The protein localises to the nucleus. Functionally, transcription factor that positively controls filamentous growth, virulence, and invasiveness. Binds directly to the two SRE-1-like elements upstream of TEC1 and thus positively regulates expression of this important hyphal growth regulator. Functions independently of known signaling cascades involving EFG1. Also regulates gene expression during intestinal colonization but is not involved in host cell adhesion. The sequence is that of Transcription factor CPH2 (CPH2) from Candida albicans (strain SC5314 / ATCC MYA-2876) (Yeast).